The following is a 700-amino-acid chain: Small ribosomal subunit protein uS3c (700 aa).

2 insert regions span residues 88–196 (NCHM…LGKF) and 282–587 (KPCT…FQTR).

It belongs to the universal ribosomal protein uS3 family. As to quaternary structure, part of the 30S ribosomal subunit.

It is found in the plastid. It localises to the chloroplast. The protein is Small ribosomal subunit protein uS3c (rps3) of Tetradesmus obliquus (Green alga).